Consider the following 743-residue polypeptide: Cytosolic neutral trehalase (743 aa).

Ca(2+) contacts are provided by aspartate 95, aspartate 97, asparagine 99, glutamine 101, and aspartate 106. Substrate is bound by residues arginine 285, 292–293 (WD), asparagine 329, 338–340 (RSQ), glutamate 405, arginine 454, and glycine 457. Residues aspartate 459 and glutamate 664 each act as proton donor/acceptor in the active site.

This sequence belongs to the glycosyl hydrolase 37 family. The cofactor is Ca(2+).

It is found in the cytoplasm. It catalyses the reaction alpha,alpha-trehalose + H2O = alpha-D-glucose + beta-D-glucose. It participates in carbohydrate degradation. In terms of biological role, hydrolyzes intracellular trehalose to glucose. In Beauveria bassiana (strain ARSEF 2860) (White muscardine disease fungus), this protein is Cytosolic neutral trehalase.